A 366-amino-acid polypeptide reads, in one-letter code: Chitoporin (366 aa).

The N-terminal stretch at 1–23 (MDKMFKRTVIGAAVALASTGLMA) is a signal peptide.

This sequence belongs to the Gram-negative porin family.

The protein resides in the cell outer membrane. Its function is as follows. Involved in the uptake of chitosugars. This Vibrio furnissii protein is Chitoporin (chiP).